The chain runs to 474 residues: Glutathione synthetase (474 aa).

Residue Ala-2 is modified to N-acetylalanine. Residue Arg-125 coordinates substrate. Glu-144 contacts ATP. Mg(2+)-binding residues include Glu-144 and Asn-146. Substrate-binding positions include 148–151, 214–216, Gln-220, and 267–270; these read ISAS, ERN, and RDGY. ATP contacts are provided by residues Lys-305, 364 to 373, Tyr-375, and 398 to 401; these read KPQREGGGNN and MEKI. Position 368 (Glu-368) interacts with Mg(2+). Ser-415 carries the post-translational modification Phosphoserine. Position 425 (Glu-425) interacts with ATP. Arg-450 is a substrate binding site. 2 residues coordinate ATP: Lys-452 and Asp-458. 461–462 lines the substrate pocket; sequence VA.

Belongs to the eukaryotic GSH synthase family. In terms of assembly, homodimer. It depends on Mg(2+) as a cofactor.

The enzyme catalyses gamma-L-glutamyl-L-cysteine + glycine + ATP = glutathione + ADP + phosphate + H(+). The catalysed reaction is gamma-L-glutamyl-(2S)-2-aminobutanoate + glycine + ATP = ophthalmate + ADP + phosphate + H(+). It functions in the pathway sulfur metabolism; glutathione biosynthesis; glutathione from L-cysteine and L-glutamate: step 2/2. Its function is as follows. Catalyzes the production of glutathione from gamma-glutamylcysteine and glycine in an ATP-dependent manner. Glutathione (gamma-glutamylcysteinylglycine, GSH) is the most abundant intracellular thiol in living aerobic cells and is required for numerous processes including the protection of cells against oxidative damage, amino acid transport, the detoxification of foreign compounds, the maintenance of protein sulfhydryl groups in a reduced state and acts as a cofactor for a number of enzymes. Participates in ophthalmate biosynthesis in hepatocytes. The protein is Glutathione synthetase of Homo sapiens (Human).